The following is a 117-amino-acid chain: Ig heavy chain V region 3 (117 aa).

The N-terminal stretch at 1-19 (MGWSCIILFLVATATGVHS) is a signal peptide. The segment at 20–49 (QVQLQQPGAELVRPGSSVKLSCKASGYTFT) is framework-1. Cys41 and Cys115 form a disulfide bridge. A complementarity-determining-1 region spans residues 50–54 (SYWMD). Residues 55-68 (WVKQRPGQGLEWIG) are framework-2. Positions 69–85 (NIYPSDSETHYNQKFKD) are complementarity-determining-2. Residues 86 to 117 (KATLTVDKSSSTAYMQLSSLTSEDSAVYYCAR) form a framework-3 region.

The sequence is that of Ig heavy chain V region 3 (Ighv1-61) from Mus musculus (Mouse).